Consider the following 297-residue polypeptide: Bifunctional protein FolD (297 aa).

Residues 167–169 (GRS), Ser192, and Ile233 each bind NADP(+).

The protein belongs to the tetrahydrofolate dehydrogenase/cyclohydrolase family. As to quaternary structure, homodimer.

The enzyme catalyses (6R)-5,10-methylene-5,6,7,8-tetrahydrofolate + NADP(+) = (6R)-5,10-methenyltetrahydrofolate + NADPH. It catalyses the reaction (6R)-5,10-methenyltetrahydrofolate + H2O = (6R)-10-formyltetrahydrofolate + H(+). Its pathway is one-carbon metabolism; tetrahydrofolate interconversion. Functionally, catalyzes the oxidation of 5,10-methylenetetrahydrofolate to 5,10-methenyltetrahydrofolate and then the hydrolysis of 5,10-methenyltetrahydrofolate to 10-formyltetrahydrofolate. The sequence is that of Bifunctional protein FolD from Caulobacter vibrioides (strain ATCC 19089 / CIP 103742 / CB 15) (Caulobacter crescentus).